The chain runs to 574 residues: Membrane protein insertase YidC (574 aa).

The helical transmembrane segment at Val-6–Glu-26 threads the bilayer. The interval Gln-65–Ala-85 is disordered. Helical transmembrane passes span Val-350 to Leu-370, Phe-376 to Tyr-396, Gly-447 to Val-467, Phe-491 to Pro-511, and Pro-525 to Val-545.

Belongs to the OXA1/ALB3/YidC family. Type 1 subfamily. Interacts with the Sec translocase complex via SecD. Specifically interacts with transmembrane segments of nascent integral membrane proteins during membrane integration.

The protein resides in the cell inner membrane. Required for the insertion and/or proper folding and/or complex formation of integral membrane proteins into the membrane. Involved in integration of membrane proteins that insert both dependently and independently of the Sec translocase complex, as well as at least some lipoproteins. Aids folding of multispanning membrane proteins. This chain is Membrane protein insertase YidC, found in Xanthomonas oryzae pv. oryzae (strain PXO99A).